Consider the following 20-residue polypeptide: Catechol 1,2-dioxygenase (20 aa).

This sequence belongs to the intradiol ring-cleavage dioxygenase family. As to quaternary structure, homodimer which dissociates into active monomeric subunits at high ionic strengths. The cofactor is Fe(3+).

It carries out the reaction catechol + O2 = cis,cis-muconate + 2 H(+). The protein operates within aromatic compound metabolism; beta-ketoadipate pathway; 5-oxo-4,5-dihydro-2-furylacetate from catechol: step 1/3. In Acinetobacter radioresistens, this protein is Catechol 1,2-dioxygenase.